The primary structure comprises 632 residues: MHYPDLFDVIVVGGGHAGVEAACAAARMGCDTLLLTQNIETIGQMSCNPSIGGIGKGHLVKEIDALDGVMARATDRAGIHWRILNRRKGAAVQATRAQADRVLYKAAVRALVEKQEHLRVFQTEVSGILLNGETVIGVSSQHKIDFHAKTVIITAGTFLGGKIYVGLNYFVGGRAGDPAALELANKLRDLPFETHRMKTGTPPRIDARSIDFSQMSEQLGDEPLPVFSYLGNVNEHPRQIPCHITHTNTQTHDIIREYIDQAPMYAGVIKDAFGPRYCPSIEDKVMRFHDKTSHQIFLEPESLTTNEIYPNGISTSLPFEAQLKYVHTIKGLEQAIITRPGYAIEYDFFNPQGLRYTLETKAIKNLFFAGQINGTTGYEEAAAQGLLAGINAALRVYDKEGWYPRRDQAYLGVLIDDLITQGTREPYRMFTSRAEHRLLLREDNADQRLTAIGYQLGCVGSARMKQFDAKMTAVAHASDQLKKLLIPADRLSGLTHNTYAAELLKRPEIDVRAVLALANVPPDEYPSDEVIEQIDIAAKYSGYIQRQYEEVAKLQKNRAQKLPVPFDYRKVTGLSAELAEKLQKVQPHDLDQAARIAGMTPAALSLLLIYFKKHTQPLSNSEKGGDCVGEKL.

13–18 (GGGHAG) lines the FAD pocket. 274 to 288 (GPRYCPSIEDKVMRF) is an NAD(+) binding site.

It belongs to the MnmG family. As to quaternary structure, homodimer. Heterotetramer of two MnmE and two MnmG subunits. The cofactor is FAD.

The protein resides in the cytoplasm. NAD-binding protein involved in the addition of a carboxymethylaminomethyl (cmnm) group at the wobble position (U34) of certain tRNAs, forming tRNA-cmnm(5)s(2)U34. The polypeptide is tRNA uridine 5-carboxymethylaminomethyl modification enzyme MnmG (Dichelobacter nodosus (strain VCS1703A)).